The sequence spans 673 residues: UvrABC system protein B (673 aa).

Positions Glu-26–Arg-183 constitute a Helicase ATP-binding domain. Gly-39–Thr-46 contributes to the ATP binding site. A Beta-hairpin motif is present at residues Tyr-92–Val-115. Residues Gln-431–Leu-597 form the Helicase C-terminal domain. In terms of domain architecture, UVR spans Gln-633 to Leu-668.

This sequence belongs to the UvrB family. As to quaternary structure, forms a heterotetramer with UvrA during the search for lesions. Interacts with UvrC in an incision complex.

The protein localises to the cytoplasm. Functionally, the UvrABC repair system catalyzes the recognition and processing of DNA lesions. A damage recognition complex composed of 2 UvrA and 2 UvrB subunits scans DNA for abnormalities. Upon binding of the UvrA(2)B(2) complex to a putative damaged site, the DNA wraps around one UvrB monomer. DNA wrap is dependent on ATP binding by UvrB and probably causes local melting of the DNA helix, facilitating insertion of UvrB beta-hairpin between the DNA strands. Then UvrB probes one DNA strand for the presence of a lesion. If a lesion is found the UvrA subunits dissociate and the UvrB-DNA preincision complex is formed. This complex is subsequently bound by UvrC and the second UvrB is released. If no lesion is found, the DNA wraps around the other UvrB subunit that will check the other stand for damage. This Enterobacter sp. (strain 638) protein is UvrABC system protein B.